A 257-amino-acid polypeptide reads, in one-letter code: 5-oxoprolinase subunit A (257 aa).

It belongs to the LamB/PxpA family. In terms of assembly, forms a complex composed of PxpA, PxpB and PxpC.

The enzyme catalyses 5-oxo-L-proline + ATP + 2 H2O = L-glutamate + ADP + phosphate + H(+). Its function is as follows. Catalyzes the cleavage of 5-oxoproline to form L-glutamate coupled to the hydrolysis of ATP to ADP and inorganic phosphate. This is 5-oxoprolinase subunit A from Halalkalibacterium halodurans (strain ATCC BAA-125 / DSM 18197 / FERM 7344 / JCM 9153 / C-125) (Bacillus halodurans).